The sequence spans 244 residues: MNHGYRTIEFLGLTFNLTNILMITVASVIVLLIAILTTRTLSIRPGKAQNFMEWIVDFVRNIIGSTMDLKTGANFLALGVTLLMYIFVSNMLGLPFSITIGHELWWKSPTADPAITLTLAVMVVALTHYYGVKMKGLKEYSKDYLRPVPFMLPMKIIEEFANTLTLGLRLYGNIFAGEILLGLLAGLATSHYSQSVALGLVGTIGAILPMLAWQAFSLFIGAIQAFIFTMLTMVYMSHKISHDH.

The next 5 membrane-spanning stretches (helical) occupy residues 17–37, 75–95, 112–132, 170–190, and 221–241; these read LTNI…AILT, FLAL…LGLP, DPAI…YYGV, LYGN…LATS, and GAIQ…HKIS.

The protein belongs to the ATPase A chain family. F-type ATPases have 2 components, CF(1) - the catalytic core - and CF(0) - the membrane proton channel. CF(1) has five subunits: alpha(3), beta(3), gamma(1), delta(1), epsilon(1). CF(0) has three main subunits: a(1), b(2) and c(9-12). The alpha and beta chains form an alternating ring which encloses part of the gamma chain. CF(1) is attached to CF(0) by a central stalk formed by the gamma and epsilon chains, while a peripheral stalk is formed by the delta and b chains. The F(1)F(0) complex interacts with SpoIIIJ and YqjG; YqgA is found in the same complex.

It localises to the cell membrane. In terms of biological role, key component of the proton channel; it plays a direct role in the translocation of protons across the membrane. The polypeptide is ATP synthase subunit a (Bacillus subtilis (strain 168)).